The sequence spans 331 residues: L-lactate dehydrogenase A chain (331 aa).

NAD(+)-binding positions include 29-57 and arginine 98; that span reads GMVGMASAISILLKDLCDELAMVDVMEDK. Substrate is bound by residues arginine 105, asparagine 137, and arginine 168. Asparagine 137 contributes to the NAD(+) binding site. Catalysis depends on histidine 192, which acts as the Proton acceptor. A substrate-binding site is contributed by threonine 247.

The protein belongs to the LDH/MDH superfamily. LDH family. As to quaternary structure, homotetramer.

Its subcellular location is the cytoplasm. It catalyses the reaction (S)-lactate + NAD(+) = pyruvate + NADH + H(+). Its pathway is fermentation; pyruvate fermentation to lactate; (S)-lactate from pyruvate: step 1/1. Its function is as follows. Interconverts simultaneously and stereospecifically pyruvate and lactate with concomitant interconversion of NADH and NAD(+). This Chaenocephalus aceratus (Blackfin icefish) protein is L-lactate dehydrogenase A chain (ldha).